A 472-amino-acid polypeptide reads, in one-letter code: MGHQSSWMKQTVIDSVVQSSKVGVFSMFSMDYKAPRKYSHGRNFGVARQQDFAADIVTRRPYAPYDNGMKKGPNKLSRNLVWTSKEYKSPEGNRPRQNAANGSAKPQVIGTGHRVSNQPRKNAVYGPRSSSLSDTRGCGPRLNGSPKKSVCNFWKDGNCKKGEKCQFLHSWSCFPGLAMVAALEGHKNDIKGIALPQGSDKLFSVSGDGTLLIWDCNSGQCVRSINLQAEAGSLISEGPWVFLGLPNAVKAFNVQNSKDVHLEGVVGQVHAMTAANGMLFAGTSSGSILVWKATDSESDPFKYLTSLEGHHSGEVTCFVVGGEVLYSGSVDKTIKVWDLNTLQCRMTLKQHIGTVTSLLCWDKCLISSSLDGTIKLWACSENESLKVVQTRKQELSVHTLCGMHDAEAKPIMFCSYQNGAVGIFDLPSFEERGKMFSTQTICTLTIGPGGLLFSGDKSGNLRVWSLASGTKV.

The tract at residues 87–139 is disordered; the sequence is YKSPEGNRPRQNAANGSAKPQVIGTGHRVSNQPRKNAVYGPRSSSLSDTRGCG. A C3H1-type zinc finger spans residues 145–172; the sequence is SPKKSVCNFWKDGNCKKGEKCQFLHSWS. WD repeat units lie at residues 185-226, 261-301, 310-347, 350-387, and 436-472; these read GHKN…RSIN, HLEG…SDPF, HHSGEVTCFVVGGEVLYSGSVDKTIKVWDLNTLQCRMT, QHIGTVTSLLCWDKCLISSSLDGTIKLWACSENESLKV, and FSTQTICTLTIGPGGLLFSGDKSGNLRVWSLASGTKV.

This chain is Zinc finger CCCH domain-containing protein 59 (ZFWD3), found in Arabidopsis thaliana (Mouse-ear cress).